The following is a 592-amino-acid chain: E3 ubiquitin-protein ligase RNF180 (592 aa).

Residues 1 to 564 (MKRSEESTST…DSRGWWFDMD (564 aa)) lie on the Cytoplasmic side of the membrane. S231 is modified (phosphoserine). The interaction with ZIC2 stretch occupies residues 282–489 (QSPPSFDPNM…VFLQTELNNA (208 aa)). An RING-type zinc finger spans residues 432–474 (CAVCLDVYFNPYMCYPCHHIFCEPCLRTLAKDNPASTPCPLCR). Residues 565-585 (MVIIYIYSVNWVIGFVVFCFL) form a helical membrane-spanning segment. At 586–592 (CYFFFPF) the chain is on the extracellular side.

As to quaternary structure, interacts with ZIC2. As to expression, brain, kidney, testis and uterus. membrane protein. Nucleus envelope.

The protein localises to the endoplasmic reticulum membrane. The protein resides in the nucleus envelope. The enzyme catalyses S-ubiquitinyl-[E2 ubiquitin-conjugating enzyme]-L-cysteine + [acceptor protein]-L-lysine = [E2 ubiquitin-conjugating enzyme]-L-cysteine + N(6)-ubiquitinyl-[acceptor protein]-L-lysine.. It participates in protein modification; protein ubiquitination. In terms of biological role, E3 ubiquitin-protein ligase which promotes polyubiquitination and degradation by the proteasome pathway of ZIC2. The polypeptide is E3 ubiquitin-protein ligase RNF180 (Rnf180) (Mus musculus (Mouse)).